The sequence spans 277 residues: Adenylate kinase (277 aa).

An ATP-binding site is contributed by 72–77; it reads GAGKGT. Residues 92–121 form an NMP region; the sequence is ATGDMLRSQVAKQTALGVQAKKIMDQGGLV. Residues T93, R98, 119 to 121, 148 to 151, and Q155 each bind AMP; these read GLV and GFPR. Residues 189 to 226 are LID; sequence GRLVHPASGRSYHKLFNPPKVAMTDDVTGDPLVQRSDD. ATP-binding positions include R190 and 199–200; that span reads SY. 2 residues coordinate AMP: R223 and R234. Position 262 (Q262) interacts with ATP.

Belongs to the adenylate kinase family. AK2 subfamily. In terms of assembly, monomer.

Its subcellular location is the cytoplasm. The protein resides in the cytosol. The protein localises to the mitochondrion intermembrane space. The enzyme catalyses AMP + ATP = 2 ADP. Catalyzes the reversible transfer of the terminal phosphate group between ATP and AMP. Plays an important role in cellular energy homeostasis and in adenine nucleotide metabolism. Adenylate kinase activity is critical for regulation of the phosphate utilization and the AMP de novo biosynthesis pathways. This Eremothecium gossypii (strain ATCC 10895 / CBS 109.51 / FGSC 9923 / NRRL Y-1056) (Yeast) protein is Adenylate kinase.